A 215-amino-acid polypeptide reads, in one-letter code: Probable nicotinate-nucleotide adenylyltransferase (215 aa).

Belongs to the NadD family.

It catalyses the reaction nicotinate beta-D-ribonucleotide + ATP + H(+) = deamido-NAD(+) + diphosphate. It functions in the pathway cofactor biosynthesis; NAD(+) biosynthesis; deamido-NAD(+) from nicotinate D-ribonucleotide: step 1/1. Catalyzes the reversible adenylation of nicotinate mononucleotide (NaMN) to nicotinic acid adenine dinucleotide (NaAD). The sequence is that of Probable nicotinate-nucleotide adenylyltransferase from Fervidobacterium nodosum (strain ATCC 35602 / DSM 5306 / Rt17-B1).